The sequence spans 108 residues: Nucleoid-associated protein BP1550 (108 aa).

Residues Ser87–Phe108 are disordered. The segment covering Pro99 to Phe108 has biased composition (pro residues).

This sequence belongs to the YbaB/EbfC family. Homodimer.

The protein resides in the cytoplasm. It localises to the nucleoid. Its function is as follows. Binds to DNA and alters its conformation. May be involved in regulation of gene expression, nucleoid organization and DNA protection. This chain is Nucleoid-associated protein BP1550, found in Bordetella pertussis (strain Tohama I / ATCC BAA-589 / NCTC 13251).